A 172-amino-acid chain; its full sequence is Large ribosomal subunit protein uL10 (172 aa).

Belongs to the universal ribosomal protein uL10 family. Part of the ribosomal stalk of the 50S ribosomal subunit. The N-terminus interacts with L11 and the large rRNA to form the base of the stalk. The C-terminus forms an elongated spine to which L12 dimers bind in a sequential fashion forming a multimeric L10(L12)X complex.

Forms part of the ribosomal stalk, playing a central role in the interaction of the ribosome with GTP-bound translation factors. This Methylobacterium radiotolerans (strain ATCC 27329 / DSM 1819 / JCM 2831 / NBRC 15690 / NCIMB 10815 / 0-1) protein is Large ribosomal subunit protein uL10.